The following is a 319-amino-acid chain: HTH-type transcriptional regulator YidZ (319 aa).

The HTH lysR-type domain maps to 8–65 (LDLNLLLCLQLLMQERSVTKAAKRMNVTPSAVSKSLAKLRAWFDDPLFVNSPLGLSPT). Residues 25 to 44 (VTKAAKRMNVTPSAVSKSLA) constitute a DNA-binding region (H-T-H motif).

This sequence belongs to the LysR transcriptional regulatory family.

Its function is as follows. Involved in anaerobic NO protection. The sequence is that of HTH-type transcriptional regulator YidZ from Escherichia coli O6:H1 (strain CFT073 / ATCC 700928 / UPEC).